We begin with the raw amino-acid sequence, 613 residues long: Protein CER1-like 2 (613 aa).

6 consecutive transmembrane segments (helical) span residues 13-33 (WTPL…DSIY), 44-64 (LLIV…ISLS), 95-115 (IIFN…TSTI), 122-142 (GVIL…YWFH), 182-202 (LILG…VVSI), and 322-342 (YLFL…SFSF). A Fatty acid hydroxylase domain is found at 134 to 268 (VEFIYYWFHR…MPMYDYIYGT (135 aa)).

The protein belongs to the sterol desaturase family. Not detected in any tissues.

It is found in the membrane. This Arabidopsis thaliana (Mouse-ear cress) protein is Protein CER1-like 2.